The sequence spans 143 residues: Ribonuclease H (143 aa).

An RNase H type-1 domain is found at 1–140; it reads MKVEIYTDGA…VDALANLGIE (140 aa). D8, E46, D68, and D132 together coordinate Mg(2+).

Belongs to the RNase H family. As to quaternary structure, monomer. Mg(2+) is required as a cofactor.

It is found in the cytoplasm. The catalysed reaction is Endonucleolytic cleavage to 5'-phosphomonoester.. Functionally, endonuclease that specifically degrades the RNA of RNA-DNA hybrids. The polypeptide is Ribonuclease H (Legionella pneumophila (strain Lens)).